An 81-amino-acid chain; its full sequence is Escargot/snail protein homolog (81 aa).

C2H2-type zinc fingers lie at residues 1 to 5, 17 to 39, 43 to 65, and 71 to 81; these read HQQFH, FSCKYCEKVYVSLGALKMHIRTH, CKCHLCGKAFSRPWLLQGHIRTH, and FSCQHCNRAFA.

The protein belongs to the snail C2H2-type zinc-finger protein family.

It is found in the nucleus. This Apis mellifera (Honeybee) protein is Escargot/snail protein homolog.